Here is an 88-residue protein sequence, read N- to C-terminus: Small ribosomal subunit protein bS20 (88 aa).

Over residues 1-21 (MANSKSAKKRALQSEKRRQHN) the composition is skewed to basic residues. Residues 1–27 (MANSKSAKKRALQSEKRRQHNASRSSM) form a disordered region.

The protein belongs to the bacterial ribosomal protein bS20 family.

Functionally, binds directly to 16S ribosomal RNA. The sequence is that of Small ribosomal subunit protein bS20 from Shewanella piezotolerans (strain WP3 / JCM 13877).